The primary structure comprises 156 residues: SsrA-binding protein (156 aa).

Residues 134–156 form a disordered region; the sequence is RQTLREQQDKRESLRELRERNRR.

The protein belongs to the SmpB family.

The protein localises to the cytoplasm. Its function is as follows. Required for rescue of stalled ribosomes mediated by trans-translation. Binds to transfer-messenger RNA (tmRNA), required for stable association of tmRNA with ribosomes. tmRNA and SmpB together mimic tRNA shape, replacing the anticodon stem-loop with SmpB. tmRNA is encoded by the ssrA gene; the 2 termini fold to resemble tRNA(Ala) and it encodes a 'tag peptide', a short internal open reading frame. During trans-translation Ala-aminoacylated tmRNA acts like a tRNA, entering the A-site of stalled ribosomes, displacing the stalled mRNA. The ribosome then switches to translate the ORF on the tmRNA; the nascent peptide is terminated with the 'tag peptide' encoded by the tmRNA and targeted for degradation. The ribosome is freed to recommence translation, which seems to be the essential function of trans-translation. This Paenarthrobacter aurescens (strain TC1) protein is SsrA-binding protein.